Reading from the N-terminus, the 61-residue chain is Probable tautomerase spyM18_1099 (61 aa).

The active-site Proton acceptor; via imino nitrogen is proline 2.

The protein belongs to the 4-oxalocrotonate tautomerase family.

This is Probable tautomerase spyM18_1099 from Streptococcus pyogenes serotype M18 (strain MGAS8232).